Reading from the N-terminus, the 371-residue chain is Choline kinase B1 (371 aa).

This sequence belongs to the choline/ethanolamine kinase family. It depends on Mg(2+) as a cofactor.

The catalysed reaction is choline + ATP = phosphocholine + ADP + H(+). This chain is Choline kinase B1 (ckb-1), found in Caenorhabditis elegans.